A 199-amino-acid chain; its full sequence is dITP/XTP pyrophosphatase (199 aa).

Substrate is bound at residue 7-12 (SNNRGK). The active-site Proton acceptor is Asp-68. A Mg(2+)-binding site is contributed by Asp-68. Substrate is bound by residues Ala-69, 154–157 (FGFD), Lys-177, and 182–183 (HR).

The protein belongs to the HAM1 NTPase family. In terms of assembly, homodimer. Mg(2+) serves as cofactor.

It carries out the reaction XTP + H2O = XMP + diphosphate + H(+). It catalyses the reaction dITP + H2O = dIMP + diphosphate + H(+). The catalysed reaction is ITP + H2O = IMP + diphosphate + H(+). In terms of biological role, pyrophosphatase that catalyzes the hydrolysis of nucleoside triphosphates to their monophosphate derivatives, with a high preference for the non-canonical purine nucleotides XTP (xanthosine triphosphate), dITP (deoxyinosine triphosphate) and ITP. Seems to function as a house-cleaning enzyme that removes non-canonical purine nucleotides from the nucleotide pool, thus preventing their incorporation into DNA/RNA and avoiding chromosomal lesions. This Albidiferax ferrireducens (strain ATCC BAA-621 / DSM 15236 / T118) (Rhodoferax ferrireducens) protein is dITP/XTP pyrophosphatase.